A 232-amino-acid chain; its full sequence is Ashwin (232 aa).

Basic and acidic residues-rich tracts occupy residues 64-97 and 116-127; these read DLPKSRWGKMMEKKREQHEIKKETKRSSPADGLR and KKTENGDNDRLR. The interval 64-232 is disordered; it reads DLPKSRWGKM…KRKIQHVTWP (169 aa). Residues 130-140 are compositionally biased toward polar residues; it reads PQASATSNTFR. The residue at position 143 (S143) is a Phosphoserine. Positions 144–156 are enriched in low complexity; the sequence is DSSSSVSPLVLSS. The span at 163–179 shows a compositional bias: basic and acidic residues; sequence KMEHGNNDNKQNHDLTH. Phosphoserine is present on residues S182, S189, and S193. Residue T198 is modified to Phosphothreonine.

This sequence belongs to the ashwin family. Component of the tRNA-splicing ligase complex.

It localises to the nucleus. The chain is Ashwin from Bos taurus (Bovine).